We begin with the raw amino-acid sequence, 714 residues long: MCGIFGYCNFLIEKTRGEIIDTLIEGLQALEYKEYDSSGISIQGDELKSLNIYKQTGKISSLKEEIDLYNLNKNLPFISHCGIAHTRRATHGGLRRANCHPHNSDPSNEFVVVHNGVITNFANLKALLVAKGYVFKSDTDTECIPKLYKHIYDTSIELGYNLDFHVLTNLVLKELEGSYGLLCTSSHFPDEVVAARKGSPLVIGVKGKTDMDVNFVEVEYLDQEEDYLKLNTQTKSSGNVLAAAPVKYNTCLRKSPPLRSQYLRNSTTSTFNHGSSTETPAENGLPRPMEFYLSSDCASLARYVSKVVYLEDNDIAHIYDGELHIHCSKIGSEDFSFRTELSKIKKGPYDNFMQKEIYEQCETTKNVMRGRVDAFTNRVVLGGLENWLTELRRAKRIIMIASKASFHSCLAARPIFEELMEVPVNVELALDFVDRNCCIFRNDVCIFVSRSGETTDTINALNYCIKKEAVTIGVVNCSGSSISRFTHCGVHTNTGPEKGIATTKSYTSQYIALVMIALWMSEDLVSKIERRKEIIQALTIVPSQIKEVLELEPLIIELCDKKLKQHDTFLLLGRGYQFASALEGASKMKEISYVHSESILTNELGHRVLAVASDNPPIIAFATKDAFSPKIASCIDQIIERKGNPIIICNKGHKIWEQDKQKGNVVTLEVPQTVDCLQGILNVIPLQLISYWLAIKKDIGVDLPRDSAMSAPDI.

The active-site Nucleophile; for GATase activity is the cysteine 2. One can recognise a Glutamine amidotransferase type-2 domain in the interval 2-321 (CGIFGYCNFL…DNDIAHIYDG (320 aa)). Over residues 266 to 280 (STTSTFNHGSSTETP) the composition is skewed to polar residues. A disordered region spans residues 266 to 285 (STTSTFNHGSSTETPAENGL). SIS domains lie at 387-526 (WLTE…DLVS) and 559-704 (CDKK…VDLP).

It catalyses the reaction D-fructose 6-phosphate + L-glutamine = D-glucosamine 6-phosphate + L-glutamate. It functions in the pathway nucleotide-sugar biosynthesis; UDP-N-acetyl-alpha-D-glucosamine biosynthesis; alpha-D-glucosamine 6-phosphate from D-fructose 6-phosphate: step 1/1. Functionally, involved in amino sugar synthesis (formation of chitin, supplies the amino sugars of asparagine-linked oligosaccharides of glycoproteins). In Saccharomyces cerevisiae (strain YJM789) (Baker's yeast), this protein is Putative glutamine--fructose-6-phosphate aminotransferase [isomerizing].